We begin with the raw amino-acid sequence, 68 residues long: DNA gyrase inhibitor YacG (68 aa).

The Zn(2+) site is built by cysteine 10, cysteine 13, cysteine 29, and cysteine 33.

It belongs to the DNA gyrase inhibitor YacG family. Interacts with GyrB. Requires Zn(2+) as cofactor.

Functionally, inhibits all the catalytic activities of DNA gyrase by preventing its interaction with DNA. Acts by binding directly to the C-terminal domain of GyrB, which probably disrupts DNA binding by the gyrase. The protein is DNA gyrase inhibitor YacG of Haemophilus influenzae (strain PittGG).